Here is a 330-residue protein sequence, read N- to C-terminus: Interleukin-12 subunit beta (330 aa).

Residues 1-22 form the signal peptide; the sequence is MHPQQLVVSWFSLVLLASPIMA. The region spanning 23–106 is the Ig-like C2-type domain; the sequence is IWELEKNVYV…LSHSLLLLHK (84 aa). The cysteines at positions 50 and 90 are disulfide-linked. Residues asparagine 136 and asparagine 224 are each glycosylated (N-linked (GlcNAc...) asparagine). Residues 239-330 form the Fibronectin type-III domain; that stretch reads PPKNLQLKPL…WSEWASVSCS (92 aa).

It belongs to the IL-12B family. As to quaternary structure, heterodimer with IL12A; disulfide-linked. The heterodimer is known as interleukin IL-12. Heterodimer with IL23A; disulfide-linked. The heterodimer is known as interleukin IL-23. Also secreted as a monomer. Interacts with NBR1; this interaction promotes IL-12 secretion.

It is found in the secreted. In terms of biological role, cytokine that can act as a growth factor for activated T and NK cells, enhance the lytic activity of NK/lymphokine-activated killer cells, and stimulate the production of IFN-gamma by resting PBMC. Associates with IL23A to form the IL-23 interleukin, a heterodimeric cytokine which functions in innate and adaptive immunity. IL-23 may constitute with IL-17 an acute response to infection in peripheral tissues. IL-23 binds to a heterodimeric receptor complex composed of IL12RB1 and IL23R, activates the Jak-Stat signaling cascade, stimulates memory rather than naive T-cells and promotes production of pro-inflammatory cytokines. IL-23 induces autoimmune inflammation and thus may be responsible for autoimmune inflammatory diseases and may be important for tumorigenesis. The protein is Interleukin-12 subunit beta (IL12B) of Lama glama (Llama).